The chain runs to 259 residues: Type III pantothenate kinase (259 aa).

9–16 (DAGNSRIK) provides a ligand contact to ATP. Substrate is bound by residues Tyr-93 and 100 to 103 (GSDR). Asp-102 (proton acceptor) is an active-site residue. Residue Thr-126 participates in ATP binding. Residue Thr-190 coordinates substrate.

The protein belongs to the type III pantothenate kinase family. In terms of assembly, homodimer. The cofactor is NH4(+). Requires K(+) as cofactor.

It is found in the cytoplasm. The catalysed reaction is (R)-pantothenate + ATP = (R)-4'-phosphopantothenate + ADP + H(+). It functions in the pathway cofactor biosynthesis; coenzyme A biosynthesis; CoA from (R)-pantothenate: step 1/5. Its function is as follows. Catalyzes the phosphorylation of pantothenate (Pan), the first step in CoA biosynthesis. The protein is Type III pantothenate kinase of Burkholderia thailandensis (strain ATCC 700388 / DSM 13276 / CCUG 48851 / CIP 106301 / E264).